Here is an 81-residue protein sequence, read N- to C-terminus: Photosystem I iron-sulfur center (81 aa).

4Fe-4S ferredoxin-type domains follow at residues 2–31 and 39–68; these read AHSV…MVPW and IASA…VRVY. [4Fe-4S] cluster is bound by residues Cys-11, Cys-14, Cys-17, Cys-21, Cys-48, Cys-51, Cys-54, and Cys-58.

In terms of assembly, the eukaryotic PSI reaction center is composed of at least 11 subunits. The cofactor is [4Fe-4S] cluster.

It is found in the plastid. Its subcellular location is the chloroplast thylakoid membrane. The enzyme catalyses reduced [plastocyanin] + hnu + oxidized [2Fe-2S]-[ferredoxin] = oxidized [plastocyanin] + reduced [2Fe-2S]-[ferredoxin]. Functionally, apoprotein for the two 4Fe-4S centers FA and FB of photosystem I (PSI); essential for photochemical activity. FB is the terminal electron acceptor of PSI, donating electrons to ferredoxin. The C-terminus interacts with PsaA/B/D and helps assemble the protein into the PSI complex. Required for binding of PsaD and PsaE to PSI. PSI is a plastocyanin-ferredoxin oxidoreductase, converting photonic excitation into a charge separation, which transfers an electron from the donor P700 chlorophyll pair to the spectroscopically characterized acceptors A0, A1, FX, FA and FB in turn. This chain is Photosystem I iron-sulfur center, found in Chlorokybus atmophyticus (Soil alga).